Here is a 905-residue protein sequence, read N- to C-terminus: Cation-transporting ATPase pma1 (905 aa).

4 helical membrane-spanning segments follow: residues phenylalanine 60–alanine 80, phenylalanine 81–isoleucine 101, phenylalanine 248–tryptophan 268, and alanine 283–isoleucine 303. Aspartate 333 functions as the 4-aspartylphosphate intermediate in the catalytic mechanism. A run of 5 helical transmembrane segments spans residues isoleucine 716–leucine 736, leucine 774–glutamate 794, methionine 809–glycine 829, isoleucine 848–phenylalanine 868, and tryptophan 880–alanine 900.

Belongs to the cation transport ATPase (P-type) (TC 3.A.3) family. Type IIA subfamily.

Its subcellular location is the cell membrane. It carries out the reaction ATP + H2O = ADP + phosphate + H(+). Its function is as follows. Could mediate calcium influx. This Synechocystis sp. (strain ATCC 27184 / PCC 6803 / Kazusa) protein is Cation-transporting ATPase pma1 (pma1).